Here is a 335-residue protein sequence, read N- to C-terminus: Biotin synthase (335 aa).

A Radical SAM core domain is found at 43–269; sequence YFGKKVKLNM…INPTKEIRIA (227 aa). Cysteine 61, cysteine 65, and cysteine 68 together coordinate [4Fe-4S] cluster. Positions 104, 137, 197, and 267 each coordinate [2Fe-2S] cluster.

This sequence belongs to the radical SAM superfamily. Biotin synthase family. In terms of assembly, homodimer. It depends on [4Fe-4S] cluster as a cofactor. The cofactor is [2Fe-2S] cluster.

The enzyme catalyses (4R,5S)-dethiobiotin + (sulfur carrier)-SH + 2 reduced [2Fe-2S]-[ferredoxin] + 2 S-adenosyl-L-methionine = (sulfur carrier)-H + biotin + 2 5'-deoxyadenosine + 2 L-methionine + 2 oxidized [2Fe-2S]-[ferredoxin]. The protein operates within cofactor biosynthesis; biotin biosynthesis; biotin from 7,8-diaminononanoate: step 2/2. Its function is as follows. Catalyzes the conversion of dethiobiotin (DTB) to biotin by the insertion of a sulfur atom into dethiobiotin via a radical-based mechanism. The sequence is that of Biotin synthase from Staphylococcus aureus (strain MSSA476).